The chain runs to 347 residues: tRNA N6-adenosine threonylcarbamoyltransferase (347 aa).

2 residues coordinate Fe cation: His-113 and His-117. Substrate contacts are provided by residues 136-140 (IVSGG), Asp-170, Gly-183, Asp-187, and Asn-282. Asp-310 provides a ligand contact to Fe cation.

This sequence belongs to the KAE1 / TsaD family. It depends on Fe(2+) as a cofactor.

It localises to the cytoplasm. It carries out the reaction L-threonylcarbamoyladenylate + adenosine(37) in tRNA = N(6)-L-threonylcarbamoyladenosine(37) in tRNA + AMP + H(+). Functionally, required for the formation of a threonylcarbamoyl group on adenosine at position 37 (t(6)A37) in tRNAs that read codons beginning with adenine. Is involved in the transfer of the threonylcarbamoyl moiety of threonylcarbamoyl-AMP (TC-AMP) to the N6 group of A37, together with TsaE and TsaB. TsaD likely plays a direct catalytic role in this reaction. This Bifidobacterium longum (strain NCC 2705) protein is tRNA N6-adenosine threonylcarbamoyltransferase.